The primary structure comprises 377 residues: Carbamoyl phosphate synthase small chain (377 aa).

Residues 1 to 186 form a CPSase region; it reads MNTPALLVLA…LGKGFVTPDK (186 aa). L-glutamine-binding residues include Ser47, Gly238, and Gly240. Positions 190 to 377 constitute a Glutamine amidotransferase type-1 domain; that stretch reads HVVAYDFGVK…IGNMKAAKQA (188 aa). Catalysis depends on Cys266, which acts as the Nucleophile. L-glutamine-binding residues include Leu267, Gln270, Asn308, Gly310, and Phe311. Residues His350 and Glu352 contribute to the active site.

This sequence belongs to the CarA family. Composed of two chains; the small (or glutamine) chain promotes the hydrolysis of glutamine to ammonia, which is used by the large (or ammonia) chain to synthesize carbamoyl phosphate. Tetramer of heterodimers (alpha,beta)4.

The enzyme catalyses hydrogencarbonate + L-glutamine + 2 ATP + H2O = carbamoyl phosphate + L-glutamate + 2 ADP + phosphate + 2 H(+). It carries out the reaction L-glutamine + H2O = L-glutamate + NH4(+). Its pathway is amino-acid biosynthesis; L-arginine biosynthesis; carbamoyl phosphate from bicarbonate: step 1/1. It participates in pyrimidine metabolism; UMP biosynthesis via de novo pathway; (S)-dihydroorotate from bicarbonate: step 1/3. In terms of biological role, small subunit of the glutamine-dependent carbamoyl phosphate synthetase (CPSase). CPSase catalyzes the formation of carbamoyl phosphate from the ammonia moiety of glutamine, carbonate, and phosphate donated by ATP, constituting the first step of 2 biosynthetic pathways, one leading to arginine and/or urea and the other to pyrimidine nucleotides. The small subunit (glutamine amidotransferase) binds and cleaves glutamine to supply the large subunit with the substrate ammonia. This is Carbamoyl phosphate synthase small chain from Neisseria gonorrhoeae.